The chain runs to 71 residues: MSYFRRRLSPIKPSDPIDYKDVDLLRKFITERGKILPRRITGLTARQQRDLAVAIKRARILALLPFLNQEG.

This sequence belongs to the bacterial ribosomal protein bS18 family. As to quaternary structure, part of the 30S ribosomal subunit. Forms a tight heterodimer with protein bS6.

Functionally, binds as a heterodimer with protein bS6 to the central domain of the 16S rRNA, where it helps stabilize the platform of the 30S subunit. In Synechococcus elongatus (strain ATCC 33912 / PCC 7942 / FACHB-805) (Anacystis nidulans R2), this protein is Small ribosomal subunit protein bS18.